A 213-amino-acid chain; its full sequence is Guanylate kinase (213 aa).

Residues 6–186 (GLLIILSSPS…TEERLKTIVS (181 aa)) form the Guanylate kinase-like domain. An ATP-binding site is contributed by 13–20 (SPSGAGKS).

Belongs to the guanylate kinase family.

The protein localises to the cytoplasm. The catalysed reaction is GMP + ATP = GDP + ADP. Its function is as follows. Essential for recycling GMP and indirectly, cGMP. The protein is Guanylate kinase of Ruegeria pomeroyi (strain ATCC 700808 / DSM 15171 / DSS-3) (Silicibacter pomeroyi).